The primary structure comprises 270 residues: 3-methyl-2-oxobutanoate hydroxymethyltransferase (270 aa).

The Mg(2+) site is built by aspartate 42 and aspartate 86. 3-methyl-2-oxobutanoate contacts are provided by residues 42–43, aspartate 86, and lysine 116; that span reads DS. Glutamate 118 provides a ligand contact to Mg(2+). Glutamate 185 serves as the catalytic Proton acceptor.

Belongs to the PanB family. Homodecamer; pentamer of dimers. The cofactor is Mg(2+).

The protein resides in the cytoplasm. It carries out the reaction 3-methyl-2-oxobutanoate + (6R)-5,10-methylene-5,6,7,8-tetrahydrofolate + H2O = 2-dehydropantoate + (6S)-5,6,7,8-tetrahydrofolate. The protein operates within cofactor biosynthesis; (R)-pantothenate biosynthesis; (R)-pantoate from 3-methyl-2-oxobutanoate: step 1/2. Its function is as follows. Catalyzes the reversible reaction in which hydroxymethyl group from 5,10-methylenetetrahydrofolate is transferred onto alpha-ketoisovalerate to form ketopantoate. This is 3-methyl-2-oxobutanoate hydroxymethyltransferase from Synechococcus sp. (strain CC9902).